The following is a 66-amino-acid chain: MWKVNDQGFLNISVTGTKLNLIAITGKLGFYADPPSHLIIMPLKFFPVHKFSKNEPNKKQKRFIYF.

The protein belongs to the asfivirus I177L family.

It localises to the virion. This Ornithodoros (relapsing fever ticks) protein is Protein I177L.